Consider the following 479-residue polypeptide: Probable xyloglucan galactosyltransferase GT15 (479 aa).

The Cytoplasmic segment spans residues 1–20; it reads MKNNNSSSVSIENHPWKKKP. The chain crosses the membrane as a helical; Signal-anchor for type II membrane protein span at residues 21 to 40; that stretch reads TTLLLFLSLLSISLLLLRLS. At 41–479 the chain is on the lumenal side; the sequence is QDKIILITTT…GIRRNEFKTD (439 aa). Residues N155, N242, N285, and N391 are each glycosylated (N-linked (GlcNAc...) asparagine).

Belongs to the glycosyltransferase 47 family. As to expression, expressed in roots, hypocotyls, cotyledons, leaves, stems and sepals.

Its subcellular location is the golgi apparatus membrane. Functions in xyloglucan synthesis by adding side chains to the xylosylated glucan backbone. Involved in the galactosylation of hemicellulose xyloglucan. The chain is Probable xyloglucan galactosyltransferase GT15 from Arabidopsis thaliana (Mouse-ear cress).